We begin with the raw amino-acid sequence, 375 residues long: Coproporphyrin III ferrochelatase (375 aa).

Residues Ser59 and Tyr128 each coordinate Fe-coproporphyrin III. Residues His191 and Glu286 each contribute to the Fe(2+) site.

It belongs to the ferrochelatase family.

The protein resides in the cytoplasm. It catalyses the reaction Fe-coproporphyrin III + 2 H(+) = coproporphyrin III + Fe(2+). The protein operates within porphyrin-containing compound metabolism; protoheme biosynthesis. Functionally, involved in coproporphyrin-dependent heme b biosynthesis. Catalyzes the insertion of ferrous iron into coproporphyrin III to form Fe-coproporphyrin III. The chain is Coproporphyrin III ferrochelatase from Streptomyces coelicolor (strain ATCC BAA-471 / A3(2) / M145).